A 116-amino-acid polypeptide reads, in one-letter code: Small ribosomal subunit protein uS13m (116 aa).

A disordered region spans residues 92 to 116 (HQDGSPLRGQRTHTNARTARKQIRK).

This sequence belongs to the universal ribosomal protein uS13 family. As to quaternary structure, part of the small ribosomal subunit.

The protein localises to the mitochondrion. In terms of biological role, located at the top of the head of the small subunit, it contacts several helices of the 18S rRNA. This chain is Small ribosomal subunit protein uS13m (RPS13), found in Triticum aestivum (Wheat).